Reading from the N-terminus, the 451-residue chain is Exodeoxyribonuclease 7 large subunit (451 aa).

The protein belongs to the XseA family. As to quaternary structure, heterooligomer composed of large and small subunits.

Its subcellular location is the cytoplasm. It carries out the reaction Exonucleolytic cleavage in either 5'- to 3'- or 3'- to 5'-direction to yield nucleoside 5'-phosphates.. Bidirectionally degrades single-stranded DNA into large acid-insoluble oligonucleotides, which are then degraded further into small acid-soluble oligonucleotides. In Bacillus cytotoxicus (strain DSM 22905 / CIP 110041 / 391-98 / NVH 391-98), this protein is Exodeoxyribonuclease 7 large subunit.